The primary structure comprises 430 residues: Tektin-2 (430 aa).

Coiled-coil stretches lie at residues K75 to L162 and K226 to K380.

It belongs to the tektin family. As to quaternary structure, microtubule inner protein component of sperm flagellar doublet microtubules. May interact with CCDC172. Post-translationally, tyrosine phosphorylated. In terms of processing, ubiquitinated, leading to its degradation. Deubiquitinated by USP16, promoting its stability.

It is found in the cytoplasm. The protein localises to the cytoskeleton. The protein resides in the cilium axoneme. Its subcellular location is the flagellum axoneme. It localises to the microtubule organizing center. Its function is as follows. Microtubule inner protein (MIP) part of the dynein-decorated doublet microtubules (DMTs) in cilia and flagellar axoneme. Plays a key role in the assembly or attachment of the inner dynein arm to microtubules in sperm flagella and tracheal cilia. Forms filamentous polymers in the walls of ciliary and flagellar microtubules. The chain is Tektin-2 (Tekt2) from Rattus norvegicus (Rat).